We begin with the raw amino-acid sequence, 124 residues long: Small ribosomal subunit protein uS12cz/uS12cy (124 aa).

Belongs to the universal ribosomal protein uS12 family. As to quaternary structure, part of the 30S ribosomal subunit.

The protein localises to the plastid. It localises to the chloroplast. In terms of biological role, with S4 and S5 plays an important role in translational accuracy. Located at the interface of the 30S and 50S subunits. The sequence is that of Small ribosomal subunit protein uS12cz/uS12cy (rps12-A) from Agrostis stolonifera (Creeping bentgrass).